A 474-amino-acid polypeptide reads, in one-letter code: Cysteine--tRNA ligase (474 aa).

Residue Cys29 participates in Zn(2+) binding. The 'HIGH' region signature appears at 31–41 (ITPYDHVHVGH). Residues Cys215, His240, and Glu244 each coordinate Zn(2+). Positions 273-277 (KMSKS) match the 'KMSKS' region motif. Residue Lys276 coordinates ATP.

The protein belongs to the class-I aminoacyl-tRNA synthetase family. Zn(2+) is required as a cofactor.

The protein resides in the cytoplasm. It carries out the reaction tRNA(Cys) + L-cysteine + ATP = L-cysteinyl-tRNA(Cys) + AMP + diphosphate. The sequence is that of Cysteine--tRNA ligase from Pyrobaculum aerophilum (strain ATCC 51768 / DSM 7523 / JCM 9630 / CIP 104966 / NBRC 100827 / IM2).